We begin with the raw amino-acid sequence, 520 residues long: Rho GTPase-activating protein gacV (520 aa).

Residues 8–28 (NIKTYYIIGIITLIFIVSAVI) form a helical membrane-spanning segment. Positions 28–192 (IKNQLSSSNQ…EEQEEEQFSM (165 aa)) form a coiled coil. Disordered regions lie at residues 33–73 (SSSN…KLDN), 121–189 (EEKQ…EEEQ), 348–373 (NNNN…NNNE), and 489–520 (LQEQ…DQEE). Residues 52 to 62 (SKGRGNKKGKK) are compositionally biased toward basic residues. Positions 63–73 (PEKIQEKKLDN) are enriched in basic and acidic residues. Residues 140 to 189 (QEEEEEEEEQQEIEEDEEEEEGQEQEEEEEQQEIEEGEEEQQEEEQEEEQ) show a composition bias toward acidic residues. The region spanning 195 to 472 (VSIERLMDFQ…ILLKQKKEIA (278 aa)) is the Rho-GAP domain. The segment covering 348 to 372 (NNNNNNNNNNNNNNNNNNDNNNNNN) has biased composition (low complexity). Positions 480–520 (YFKDEYSKKLQEQNDQEEDNQEEEKDNQEEDEDEEDKDQEE) form a coiled coil. Positions 493–520 (NDQEEDNQEEEKDNQEEDEDEEDKDQEE) are enriched in acidic residues.

It is found in the membrane. In terms of biological role, rho GTPase-activating protein involved in the signal transduction pathway. This Dictyostelium discoideum (Social amoeba) protein is Rho GTPase-activating protein gacV (gacV).